The chain runs to 194 residues: Large ribosomal subunit protein bL9c (194 aa).

Residues 1–39 constitute a chloroplast transit peptide; the sequence is MASSTLSSLSSTPLQHSFAANLKTCSQFPNKSSGFMVFA.

This sequence belongs to the bacterial ribosomal protein bL9 family. As to quaternary structure, part of the 50S ribosomal subunit.

It localises to the plastid. The protein resides in the chloroplast. In terms of biological role, binds to the 23S rRNA. In Pisum sativum (Garden pea), this protein is Large ribosomal subunit protein bL9c (RPL9).